Consider the following 421-residue polypeptide: MVRYILDHNLQDIDVEVFDCISGELNRQNSQLQLIASENFVSKAVLEAQGSIFTNKYAEGYPGKRYYCGCHFADIVENIAIERLCKLFGCKFANVQPHSGSQANQGVFAALLKPGDTVVGLSLDCGGHLTHGSAPSISGKWFNAVQYQVDRNTGLLDMDEIEKLVLEHKPTLLIAGSSAYPRTIDFKRFREIADKVGAYLLADIAHYAGLIAAGEFPSPFEYAHVVTSTTHKTLRGPRGAVIMTNYEDIHKKIQSSIFPGMQGGPLMHVIAAKAVAFGEALKPDFKDYAKQIIKNSRVLVEVFKERGLNIVTDGTDSHIVLVDLRPKGVTGKDAVLALERLGIICNKNAIPFDTEKPFVTSGLRFGSAAETSRGLQESEFREIGNMVCDVIDNLKASDIVKASVEQDVIKKVKELTFAFIS.

Residues Leu-123 and 127-129 contribute to the (6S)-5,6,7,8-tetrahydrofolate site; that span reads GHL. Lys-232 carries the post-translational modification N6-(pyridoxal phosphate)lysine.

It belongs to the SHMT family. In terms of assembly, homodimer. It depends on pyridoxal 5'-phosphate as a cofactor.

It localises to the cytoplasm. The enzyme catalyses (6R)-5,10-methylene-5,6,7,8-tetrahydrofolate + glycine + H2O = (6S)-5,6,7,8-tetrahydrofolate + L-serine. It participates in one-carbon metabolism; tetrahydrofolate interconversion. The protein operates within amino-acid biosynthesis; glycine biosynthesis; glycine from L-serine: step 1/1. Catalyzes the reversible interconversion of serine and glycine with tetrahydrofolate (THF) serving as the one-carbon carrier. This reaction serves as the major source of one-carbon groups required for the biosynthesis of purines, thymidylate, methionine, and other important biomolecules. Also exhibits THF-independent aldolase activity toward beta-hydroxyamino acids, producing glycine and aldehydes, via a retro-aldol mechanism. This Ehrlichia canis (strain Jake) protein is Serine hydroxymethyltransferase.